We begin with the raw amino-acid sequence, 252 residues long: Aspartate/glutamate leucyltransferase (252 aa).

The protein belongs to the R-transferase family. Bpt subfamily.

It localises to the cytoplasm. The catalysed reaction is N-terminal L-glutamyl-[protein] + L-leucyl-tRNA(Leu) = N-terminal L-leucyl-L-glutamyl-[protein] + tRNA(Leu) + H(+). The enzyme catalyses N-terminal L-aspartyl-[protein] + L-leucyl-tRNA(Leu) = N-terminal L-leucyl-L-aspartyl-[protein] + tRNA(Leu) + H(+). Its function is as follows. Functions in the N-end rule pathway of protein degradation where it conjugates Leu from its aminoacyl-tRNA to the N-termini of proteins containing an N-terminal aspartate or glutamate. This is Aspartate/glutamate leucyltransferase from Polynucleobacter necessarius subsp. necessarius (strain STIR1).